The following is a 382-amino-acid chain: Dual-specificity RNA methyltransferase RlmN (382 aa).

Glutamate 96 (proton acceptor) is an active-site residue. Residues 102 to 342 (QGKRGTLCVS…VRTTRGEDID (241 aa)) form the Radical SAM core domain. A disulfide bond links cysteine 109 and cysteine 345. Residues cysteine 116, cysteine 120, and cysteine 123 each coordinate [4Fe-4S] cluster. S-adenosyl-L-methionine contacts are provided by residues 170-171 (GE), serine 202, 224-226 (SLH), and asparagine 302. Residue cysteine 345 is the S-methylcysteine intermediate of the active site.

This sequence belongs to the radical SAM superfamily. RlmN family. [4Fe-4S] cluster serves as cofactor.

Its subcellular location is the cytoplasm. The catalysed reaction is adenosine(2503) in 23S rRNA + 2 reduced [2Fe-2S]-[ferredoxin] + 2 S-adenosyl-L-methionine = 2-methyladenosine(2503) in 23S rRNA + 5'-deoxyadenosine + L-methionine + 2 oxidized [2Fe-2S]-[ferredoxin] + S-adenosyl-L-homocysteine. It catalyses the reaction adenosine(37) in tRNA + 2 reduced [2Fe-2S]-[ferredoxin] + 2 S-adenosyl-L-methionine = 2-methyladenosine(37) in tRNA + 5'-deoxyadenosine + L-methionine + 2 oxidized [2Fe-2S]-[ferredoxin] + S-adenosyl-L-homocysteine. Functionally, specifically methylates position 2 of adenine 2503 in 23S rRNA and position 2 of adenine 37 in tRNAs. m2A2503 modification seems to play a crucial role in the proofreading step occurring at the peptidyl transferase center and thus would serve to optimize ribosomal fidelity. The protein is Dual-specificity RNA methyltransferase RlmN of Pseudomonas syringae pv. tomato (strain ATCC BAA-871 / DC3000).